The sequence spans 194 residues: MSEFRTFVLCGLGNPGLRYAQTRHNLGFMLIDYVRYTFSFPEFLPKFSGLLSSGRVSSFLLYLFKPVAFMNNSGRPLVQLVNFYKVELENVIVFHDDIDLDFAKVKIKRGGGSGGHNGLKSLDFNLGRDYWRFRFGVGRGVGDPAEHVLSRFTALELERLNKLFGFIGTNLPLLLSDIATRKEKFLNEYKCCSQ.

Tyrosine 19 is a binding site for tRNA. The Proton acceptor role is filled by histidine 24. TRNA is bound by residues phenylalanine 69, asparagine 71, and asparagine 117.

The protein belongs to the PTH family. Monomer.

The protein resides in the cytoplasm. The enzyme catalyses an N-acyl-L-alpha-aminoacyl-tRNA + H2O = an N-acyl-L-amino acid + a tRNA + H(+). Hydrolyzes ribosome-free peptidyl-tRNAs (with 1 or more amino acids incorporated), which drop off the ribosome during protein synthesis, or as a result of ribosome stalling. Its function is as follows. Catalyzes the release of premature peptidyl moieties from peptidyl-tRNA molecules trapped in stalled 50S ribosomal subunits, and thus maintains levels of free tRNAs and 50S ribosomes. The sequence is that of Peptidyl-tRNA hydrolase from Neorickettsia sennetsu (strain ATCC VR-367 / Miyayama) (Ehrlichia sennetsu).